We begin with the raw amino-acid sequence, 282 residues long: Putative glycosyltransferase HI_0765 (282 aa).

The protein belongs to the glycosyltransferase 25 family.

This chain is Putative glycosyltransferase HI_0765, found in Haemophilus influenzae (strain ATCC 51907 / DSM 11121 / KW20 / Rd).